A 386-amino-acid polypeptide reads, in one-letter code: Putative gustatory receptor 92a (386 aa).

The Cytoplasmic portion of the chain corresponds to 1–14 (MFEFLHQMSAPKLS). A helical membrane pass occupies residues 15–35 (TSILRYIFRYAQFIGVIFFCL). Over 36–79 (HTRKDDKTVFIRNWLKWLNVTHRIITFTRFFWVYIASISIKTNR) the chain is Extracellular. An N-linked (GlcNAc...) asparagine glycan is attached at Asn-54. The helical transmembrane segment at 80–100 (VLQVLHGMRLVLSIPNVAVIL) threads the bilayer. The Cytoplasmic segment spans residues 101-141 (CYHIFRGPEIIDLINQFLRLFRQVSDLFKTKTPGFGGRREL). Residues 142–162 (ILILLNLISFAHEQTYLWFTI) traverse the membrane as a helical segment. Residues 163–169 (RKGFSWR) are Extracellular-facing. The helical transmembrane segment at 170–190 (FLIDWWCDFYLVSATNIFIHI) threads the bilayer. Over 191–256 (NSIGYLSLGV…YHTSIMFHKL (66 aa)) the chain is Cytoplasmic. The chain crosses the membrane as a helical span at residues 257–277 (FVPLLFLALIYKVLLIALIGF). Residues 278–287 (NVAVEFYLNS) are Extracellular-facing. A helical membrane pass occupies residues 288–308 (FIFWILLGKHVLDLFLVTVSV). Topologically, residues 309–356 (EGAVNQFLNIGMQFGNVGDLSKFQTTLDTLFLHLRLGHFRVSILGLFD) are cytoplasmic. Residues 357–377 (VTQMQYLQFLSALLSGLAFIA) form a helical membrane-spanning segment. The Extracellular portion of the chain corresponds to 378-386 (QYRMQVGNG).

The protein belongs to the insect chemoreceptor superfamily. Gustatory receptor (GR) family. Gr93a subfamily.

The protein resides in the cell membrane. In terms of biological role, probable gustatory receptor which mediates acceptance or avoidance behavior, depending on its substrates. This is Putative gustatory receptor 92a (Gr92a) from Drosophila melanogaster (Fruit fly).